Consider the following 156-residue polypeptide: Ribosomal RNA large subunit methyltransferase H (156 aa).

S-adenosyl-L-methionine contacts are provided by residues Leu-73, Gly-104, and 123–128 (LSKLTL).

It belongs to the RNA methyltransferase RlmH family. As to quaternary structure, homodimer.

It is found in the cytoplasm. It carries out the reaction pseudouridine(1915) in 23S rRNA + S-adenosyl-L-methionine = N(3)-methylpseudouridine(1915) in 23S rRNA + S-adenosyl-L-homocysteine + H(+). Functionally, specifically methylates the pseudouridine at position 1915 (m3Psi1915) in 23S rRNA. In Idiomarina loihiensis (strain ATCC BAA-735 / DSM 15497 / L2-TR), this protein is Ribosomal RNA large subunit methyltransferase H.